A 636-amino-acid chain; its full sequence is Signal recognition particle receptor subunit alpha (636 aa).

Disordered stretches follow at residues 132–205 (APTT…ELSK), 217–246 (IQKH…APRV), and 280–314 (IRGT…TKGT). Basic and acidic residues-rich tracts occupy residues 137–146 (KKFEDSEKAK) and 153–165 (IETR…EKAK). The residue at position 177 (Ser-177) is a Phosphoserine. The segment covering 217–238 (IQKHGKGLDKSSKSTKSDTPKE) has biased composition (basic and acidic residues). Phosphothreonine is present on Thr-283. A phosphoserine mark is found at Ser-295, Ser-296, and Ser-297. The span at 302 to 312 (ATQNTKPSATK) shows a compositional bias: polar residues. Thr-303 bears the Phosphothreonine mark. The segment at 417–634 (YVVTFCGVNG…NAKAVVAALM (218 aa)) is NG domain. GTP is bound by residues 423-430 (GVNGVGKS) and 518-522 (DTAGR). At Thr-576 the chain carries Phosphothreonine. 586-589 (TKFD) contributes to the GTP binding site.

This sequence belongs to the GTP-binding SRP family. As to quaternary structure, heterodimer with SRPRB. Interacts with the signal recognition particle (SRP) complex subunit SRP54.

The protein localises to the endoplasmic reticulum membrane. Component of the SRP (signal recognition particle) receptor. Ensures, in conjunction with the signal recognition particle, the correct targeting of the nascent secretory proteins to the endoplasmic reticulum membrane system. Forms a guanosine 5'-triphosphate (GTP)-dependent complex with the SRP subunit SRP54. SRP receptor compaction and GTPase rearrangement drive SRP-mediated cotranslational protein translocation into the ER. In Mus musculus (Mouse), this protein is Signal recognition particle receptor subunit alpha.